Consider the following 542-residue polypeptide: MSISVCYYLSKMSESTKVQFEKKSVGHNSDDEYDDTVPYNEDDETSEEEVQEYNEDEVIHPGFVLKGTYLLLKKIGSGNNASVWMTYHISNDKFLAMKIQDHLCYNDGCREVTIVNKISEYGKNNPDFFCVQLLDHFYFELSDNIKYVCSIYELYAGSIHFLLEEGKYKYGLPLPVVKTIIKQLLTSLSTLHGKLNIIHSDVKPENILFKGLPDYQKNIIKLFNRSGFREKYAELCSEYPNRHENLEIEDEFMDNLEYIAMDAIKEIRILEECLNTNEELIPDDPDNNEKYYDSTDSEEYDYSDNSDYYDDDEDTGPIKKYNERLQSVDDCQEILDCKEICDLDKEYNFATVLNNRESSSDKREIIDDKYVINCQTALTDFGNSYFFDKRTRNEIQDRRYRAPEVILDLNYTFCCDIWSVACVAYELATGYVLFDPFGEHFLNRDLHHLFLIEKIVGEIPLAMKKKSKRRKFLFDKSRGYHIKNVDEFKSTNLETILMNQYLFSKEEAESFANFLMCGLSIDPATRSNADELLKHPWLNDVN.

The span at 20 to 30 (FEKKSVGHNSD) shows a compositional bias: basic and acidic residues. The tract at residues 20–49 (FEKKSVGHNSDDEYDDTVPYNEDDETSEEE) is disordered. Over residues 31–49 (DEYDDTVPYNEDDETSEEE) the composition is skewed to acidic residues. One can recognise a Protein kinase domain in the interval 69–538 (YLLLKKIGSG…ADELLKHPWL (470 aa)). ATP contacts are provided by residues 75–83 (IGSGNNASV) and Lys-98. Asp-201 (proton acceptor) is an active-site residue. Residues 278–314 (EELIPDDPDNNEKYYDSTDSEEYDYSDNSDYYDDDED) are disordered. Residues 295 to 314 (TDSEEYDYSDNSDYYDDDED) are compositionally biased toward acidic residues.

Belongs to the protein kinase superfamily. Ser/Thr protein kinase family.

It catalyses the reaction L-seryl-[protein] + ATP = O-phospho-L-seryl-[protein] + ADP + H(+). The catalysed reaction is L-threonyl-[protein] + ATP = O-phospho-L-threonyl-[protein] + ADP + H(+). This Acanthamoeba polyphaga (Amoeba) protein is Putative serine/threonine-protein kinase L205.